Consider the following 229-residue polypeptide: Heptaprenylglyceryl phosphate synthase (229 aa).

Lys12 contacts sn-glycerol 1-phosphate. Residues Asp14 and Ser40 each coordinate Mg(2+). Residues 159 to 164 (YLEYSG), Gly189, and 209 to 210 (GN) contribute to the sn-glycerol 1-phosphate site.

This sequence belongs to the GGGP/HepGP synthase family. Group I subfamily. Homodimer. Mg(2+) serves as cofactor.

It carries out the reaction sn-glycerol 1-phosphate + all-trans-heptaprenyl diphosphate = 3-heptaprenyl-sn-glycero-1-phosphate + diphosphate. Its pathway is membrane lipid metabolism; glycerophospholipid metabolism. Prenyltransferase that catalyzes in vivo the transfer of the heptaprenyl moiety of heptaprenyl pyrophosphate (HepPP; 35 carbon atoms) to the C3 hydroxyl of sn-glycerol-1-phosphate (G1P), producing heptaprenylglyceryl phosphate (HepGP). This reaction is an ether-bond-formation step in the biosynthesis of archaea-type G1P-based membrane lipids found in Bacillales. The protein is Heptaprenylglyceryl phosphate synthase of Bacillus cereus (strain ATCC 14579 / DSM 31 / CCUG 7414 / JCM 2152 / NBRC 15305 / NCIMB 9373 / NCTC 2599 / NRRL B-3711).